The chain runs to 419 residues: MSSDVRVHTWPCSYYLDLEKQWLPGKLTLTPRSLKFSVDKAEEVLVGLPLSSITEIRKETSLFIFSAITVLEKGQAKHWFSSLRPSRNVVFNIIEHFWRELLLSQPGTAANPTSPMTRGQELMGLMASSQRRMEDTAKVLHHQGEQLDSVMRGLEKMESDLDVADRLLTELETPSWWPFSAKFWKTPVEAKPRDSVSVAPCEPFGKEGVVIRVPAVVSQRTESHSKPGKLTVLVSGLEIHDSSSLLLHRFEKEDVDDIKVHSPYEVSIRQRFIGKPDVAYRLISAKMPEVIPILEVQFSKKIELLEDALVLRSRGRASPAEGGCSIRHAASRLMGCTTHQELPTGGQEGQQSQLQKDWPLLSEGEAQELTQILSKLKGLALDTEAELERQDAALDGITVAVDRATLTVDKHNRRMRKLL.

2 consecutive t-SNARE coiled-coil homology domains span residues Ala-109–Leu-171 and Lys-356–Leu-418.

This sequence belongs to the SVAP1 family. Associates with the BLOC-1 complex. Interacts with BLOC1S6. Forms a complex containing SNAP47, VAMP2 and STX1A.

The protein resides in the endomembrane system. Its subcellular location is the cytoplasm. It localises to the perinuclear region. Its function is as follows. May play a role in intracellular membrane fusion. The polypeptide is Synaptosomal-associated protein 47 (Snap47) (Rattus norvegicus (Rat)).